The following is a 96-amino-acid chain: Prokineticin Bv8-like peptide 2 (96 aa).

Positions 1-19 (MKCFAQIVVLLLVIAFSHG) are cleaved as a signal peptide. Cystine bridges form between Cys26/Cys38, Cys32/Cys50, Cys37/Cys78, Cys60/Cys86, and Cys80/Cys95.

This sequence belongs to the AVIT (prokineticin) family. Expressed by the skin glands.

It is found in the secreted. Its function is as follows. Potent agonist for both PKR1/PROKR1 and PKR2/PROKR2, and inducer of a potent and long-lasting hyperalgesia. Also potentiates capsaicin-induced TRPV1 current when tested on DRG neurons. At subnanomolar concentrations, this protein both induces potent chemotaxis of macrophages and stimulates LPS-induced production of the pro-inflammatory cytokines IL-1 and IL-12. In vivo, potently stimulates the contraction of the guinea-pig gastrointestinal (GI) smooth muscle (nanomolar concentration) and rabbit aortic rings. The sequence is that of Prokineticin Bv8-like peptide 2 from Bombina maxima (Giant fire-bellied toad).